The sequence spans 572 residues: Phosphoglucomutase-1 (572 aa).

Residues Thr23, Arg27, 126–127, and Lys140 contribute to the substrate site; that span reads SH. Catalysis depends on Ser126, which acts as the Phosphoserine intermediate. Mg(2+) is bound at residue Ser126. Mg(2+)-binding residues include Asp308, Asp310, and Asp312. Substrate contacts are provided by residues 312–313, Thr373, 392–394, Lys405, and Arg527; these read DR and EES.

This sequence belongs to the phosphohexose mutase family. Requires Mg(2+) as cofactor. Post-translationally, phosphorylated via a calcium-dependent protein kinase. Very rapidly (within 80 ms) dephosphorylated during triggered trichocyst exocytosis. O-glycosylated with a short chain of mannose residues.

The protein resides in the cytoplasm. It catalyses the reaction alpha-D-glucose 1-phosphate = alpha-D-glucose 6-phosphate. May be involved in membrane fusion in exocytosis. This is Phosphoglucomutase-1 (pp63-1) from Paramecium tetraurelia.